A 255-amino-acid chain; its full sequence is MRVDLNSDLGESFGRYKLGLDEEVMRYITSANIACGWHAGDPIVMRRTVKLAKENNVQVGAHPGYPDLMGFGRRYMKLTPEEARNYILYQIGALYAFAKAEGVELQHVKPHGALYNAMVKEEELARAVIEGILDFDKNLILVTLSNSRVAEIAEEMGLKVAHEVFADRAYNPDGTLVPRGKPGAVIEDKEEIAERVISMVKDGGVRAINGEWVELRVDTICVHGDNPKALEITSHIRKILEEEGVKVVPLKDFIG.

The protein belongs to the LamB/PxpA family. Forms a complex composed of PxpA, PxpB and PxpC.

The enzyme catalyses 5-oxo-L-proline + ATP + 2 H2O = L-glutamate + ADP + phosphate + H(+). Catalyzes the cleavage of 5-oxoproline to form L-glutamate coupled to the hydrolysis of ATP to ADP and inorganic phosphate. In Pyrococcus abyssi (strain GE5 / Orsay), this protein is 5-oxoprolinase subunit A.